A 331-amino-acid chain; its full sequence is Trans-O-hydroxybenzylidenepyruvate hydratase-aldolase (331 aa).

This sequence belongs to the DapA family.

The catalysed reaction is (3E)-4-(2-hydroxyphenyl)-2-oxobut-3-enoate + H2O = salicylaldehyde + pyruvate. It functions in the pathway aromatic compound metabolism; naphthalene degradation. Functionally, involved in the naphthalene upper catabolic pathway. Catalyzes the transformation of trans-O-hydroxybenzylidenepyruvate (THBPA) to salicylaldehyde and pyruvate. The reaction is reversible. Can also use substrate which carry trans-alpha,beta-unsaturated keto acid side chain and adjacent hydroxyl group such as trans-4-(3-hydroxy-2-thianaphthenyl)-2-oxo-but-3-enoate, trans-4-(3-hydroxy-2-benzofuranyl)-2-oxobut-3-enoate, and trans-4-(3-hydroxy-2-thienyl)-2-oxobut-3-enoate. In Pseudomonas putida (Arthrobacter siderocapsulatus), this protein is Trans-O-hydroxybenzylidenepyruvate hydratase-aldolase (nahE).